We begin with the raw amino-acid sequence, 426 residues long: Pannexin-1 (426 aa).

Topologically, residues 1 to 40 are cytoplasmic; it reads MAIAHLATEYVFSDFLLKEPTEPKFKGLRLELAVDKMVTC. S-nitrosocysteine is present on cysteine 40. Residues 41–61 traverse the membrane as a helical segment; it reads IAVGLPLLLISLAFAQEISIG. Over 62–106 the chain is Extracellular; it reads TQISCFSPSSFSWRQAAFVDSYCWAAVQQKNSLQSESGNLPLWLH. 2 disulfides stabilise this stretch: cysteine 66–cysteine 264 and cysteine 84–cysteine 245. Residues 107–127 traverse the membrane as a helical segment; the sequence is KFFPYILLLFAILLYLPALFW. The Cytoplasmic segment spans residues 128–216; sequence RFAAAPHLCS…HLIMKYISCR (89 aa). Phosphotyrosine is present on tyrosine 198. The helical transmembrane segment at 217–237 threads the bilayer; sequence LVTFAVVLLACIYLSYYFSLS. Residues 238–277 lie on the Extracellular side of the membrane; sequence SLSDEFLCSIKSGVLRNDSTIPDSFQCKLIAVGIFQLLSL. N-linked (GlcNAc...) asparagine glycosylation is present at asparagine 254. The helical transmembrane segment at 278–298 threads the bilayer; that stretch reads INLLVYALLVPVVIYTLFVPF. Residues 299–426 are Cytoplasmic-facing; it reads RQKTDVLKVY…SRQRLLNSSC (128 aa). Cysteine 346 is modified (S-nitrosocysteine). The segment at 407 to 426 is disordered; it reads ETAANNGEKNSRQRLLNSSC.

The protein belongs to the pannexin family. Homoheptameric. In terms of processing, S-nitrosylation inhibits channel currents and ATP release. Post-translationally, N-glycosylation plays a role in cell surface targeting. Glycosylation at its extracellular surface makes unlikely that two oligomers could dock to form an intercellular channel such as in gap junctions. Exists in three glycosylation states: non-glycosylated (GLY0), high-mannose glycosylated (GLY1), and fully mature glycosylated (GLY2). Cleaved by CASP3 and CASP7 during apoptosis. Cleavage opens the channel for the release of metabolites and induces plasma membrane permeability during apoptosis. In terms of processing, phosphorylated at Tyr-198 by SRC. Phosphorylation activates ATP release. Constitutively phosphorylated in vascular smooth muscle cells. As to expression, expressed in the eye, thyroid, prostate, kidney and liver. Abundantly expressed in the CNS, including hippocampus, olfactory bulb, cortex, cerebellum and white matter.

It is found in the cell membrane. The protein localises to the endoplasmic reticulum membrane. The catalysed reaction is Ca(2+)(in) = Ca(2+)(out). The enzyme catalyses ATP(in) = ATP(out). It carries out the reaction K(+)(in) = K(+)(out). It catalyses the reaction chloride(in) = chloride(out). The catalysed reaction is iodide(out) = iodide(in). The enzyme catalyses Na(+)(in) = Na(+)(out). It carries out the reaction nitrate(in) = nitrate(out). It catalyses the reaction L-aspartate(out) = L-aspartate(in). The catalysed reaction is L-glutamate(out) = L-glutamate(in). The enzyme catalyses D-gluconate(in) = D-gluconate(out). It carries out the reaction spermidine(in) = spermidine(out). Ion channel involved in a variety of physiological functions such as blood pressure regulation, apoptotic cell clearance and oogenesis. Forms anion-selective channels with relatively low conductance and an order of permeabilities: nitrate&gt;iodide&gt;chlroride&gt;&gt;aspartate=glutamate=gluconate. Can release ATP upon activation through phosphorylation or cleavage at C-terminus. May play a role as a Ca(2+)-leak channel to regulate ER Ca(2+) homeostasis. Functionally, during apoptosis, the C terminal tail is cleaved by caspases, which opens the main pore acting as a large-pore ATP efflux channel with a broad distribution, which allows the regulated release of molecules and ions smaller than 1 kDa, such as nucleotides ATP and UTP, and selective plasma membrane permeability to attract phagocytes that engulf the dying cells. In Rattus norvegicus (Rat), this protein is Pannexin-1 (Panx1).